Reading from the N-terminus, the 98-residue chain is Small ribosomal subunit protein bS20 (98 aa).

Over residues 1-12 (MAPRKPSKKVGP) the composition is skewed to basic residues. Positions 1–31 (MAPRKPSKKVGPQKRPSAEKRVITSKKKQLR) are disordered.

The protein belongs to the bacterial ribosomal protein bS20 family.

Its function is as follows. Binds directly to 16S ribosomal RNA. The polypeptide is Small ribosomal subunit protein bS20 (Chlamydia trachomatis serovar A (strain ATCC VR-571B / DSM 19440 / HAR-13)).